The primary structure comprises 299 residues: Putative peptidyl-prolyl cis-trans isomerase HP_0175 (299 aa).

An N-terminal signal peptide occupies residues 1 to 21; it reads MKKNILNLALVGALSTSFLMA. One can recognise a PpiC domain in the interval 154–253; the sequence is KQEAHARHIL…FGYHIIYLIS (100 aa).

It carries out the reaction [protein]-peptidylproline (omega=180) = [protein]-peptidylproline (omega=0). The polypeptide is Putative peptidyl-prolyl cis-trans isomerase HP_0175 (Helicobacter pylori (strain ATCC 700392 / 26695) (Campylobacter pylori)).